The following is a 142-amino-acid chain: Putative pre-16S rRNA nuclease (142 aa).

This sequence belongs to the YqgF nuclease family.

The protein localises to the cytoplasm. Its function is as follows. Could be a nuclease involved in processing of the 5'-end of pre-16S rRNA. In Malacoplasma penetrans (strain HF-2) (Mycoplasma penetrans), this protein is Putative pre-16S rRNA nuclease.